Reading from the N-terminus, the 360-residue chain is D-alanine--D-alanine ligase (360 aa).

The 207-residue stretch at 146–352 folds into the ATP-grasp domain; the sequence is KICAEHAGLH…FSQLIDRLLQ (207 aa). Residue 179 to 234 coordinates ATP; it reads LEEFTLPFFVKPASQGSSIGITKVHRPEELAAALEKAFMVDTKVLIEKTIEGREIE. Residues Asp305, Glu319, and Asn321 each contribute to the Mg(2+) site.

It belongs to the D-alanine--D-alanine ligase family. The cofactor is Mg(2+). Mn(2+) is required as a cofactor.

It is found in the cytoplasm. It catalyses the reaction 2 D-alanine + ATP = D-alanyl-D-alanine + ADP + phosphate + H(+). The protein operates within cell wall biogenesis; peptidoglycan biosynthesis. Cell wall formation. In Prosthecochloris aestuarii (strain DSM 271 / SK 413), this protein is D-alanine--D-alanine ligase.